The chain runs to 117 residues: Immunoglobulin kappa variable 1-5 (117 aa).

Positions 1 to 22 are cleaved as a signal peptide; it reads MDMRVPAQLLGLLLLWLPGAKC. Positions 23 to 45 are framework-1; sequence DIQMTQSPSTLSASVGDRVTITC. Positions 24 to 117 constitute an Ig-like domain; that stretch reads IQMTQSPSTL…YYCQQYNSYS (94 aa). An intrachain disulfide couples cysteine 45 to cysteine 110. Residues 46 to 56 form a complementarity-determining-1 region; it reads RASQSISSWLA. The interval 57-71 is framework-2; the sequence is WYQQKPGKAPKLLIY. The tract at residues 72 to 78 is complementarity-determining-2; it reads KASSLES. A framework-3 region spans residues 79 to 110; it reads GVPSRFSGSGSGTEFTLTISSLQPDDFATYYC. The complementarity-determining-3 stretch occupies residues 111 to 117; it reads QQYNSYS.

Immunoglobulins are composed of two identical heavy chains and two identical light chains; disulfide-linked.

It localises to the secreted. The protein localises to the cell membrane. Its function is as follows. V region of the variable domain of immunoglobulin light chains that participates in the antigen recognition. Immunoglobulins, also known as antibodies, are membrane-bound or secreted glycoproteins produced by B lymphocytes. In the recognition phase of humoral immunity, the membrane-bound immunoglobulins serve as receptors which, upon binding of a specific antigen, trigger the clonal expansion and differentiation of B lymphocytes into immunoglobulins-secreting plasma cells. Secreted immunoglobulins mediate the effector phase of humoral immunity, which results in the elimination of bound antigens. The antigen binding site is formed by the variable domain of one heavy chain, together with that of its associated light chain. Thus, each immunoglobulin has two antigen binding sites with remarkable affinity for a particular antigen. The variable domains are assembled by a process called V-(D)-J rearrangement and can then be subjected to somatic hypermutations which, after exposure to antigen and selection, allow affinity maturation for a particular antigen. The chain is Immunoglobulin kappa variable 1-5 from Homo sapiens (Human).